A 144-amino-acid polypeptide reads, in one-letter code: Large ribosomal subunit protein uL15 (144 aa).

Residues 1–59 (MHLNTLAPAPGAKKSSKRVGRGMGSGLGKTGGRGHKGQKSRSGGSVKPGFEGGQMPIQR) are disordered. A compositionally biased stretch (gly residues) spans 21–31 (RGMGSGLGKTG).

Belongs to the universal ribosomal protein uL15 family. In terms of assembly, part of the 50S ribosomal subunit.

Binds to the 23S rRNA. The protein is Large ribosomal subunit protein uL15 of Pseudoalteromonas atlantica (strain T6c / ATCC BAA-1087).